Here is a 138-residue protein sequence, read N- to C-terminus: Phospholipase A2 homolog 1 (138 aa).

Positions 1–16 are cleaved as a signal peptide; that stretch reads MRTLWIMAVLLVGVEG. Disulfide bonds link cysteine 42–cysteine 132, cysteine 44–cysteine 60, cysteine 59–cysteine 111, cysteine 65–cysteine 138, cysteine 66–cysteine 104, cysteine 73–cysteine 97, and cysteine 91–cysteine 102. Residues 121 to 134 are important for membrane-damaging activities in eukaryotes and bacteria; heparin-binding; the sequence is KKYKNNYLKPFCKK.

The protein belongs to the phospholipase A2 family. Group II subfamily. K49 sub-subfamily. In terms of assembly, homodimer; non-covalently linked (probable alternative/compact dimer conformation in solution). As to expression, expressed by the venom gland.

Its subcellular location is the secreted. Functionally, snake venom phospholipase A2 homolog that lacks enzymatic and anticoagulant activities. In mice, it induces conspicuous local myonecrosis, edema, and a systemic interleukin-6 response. In vitro, it is cytolytic upon myoblasts, and weakly bactericidal. A model of myotoxic mechanism has been proposed: an apo Lys49-PLA2 is activated by the entrance of a hydrophobic molecule (e.g. fatty acid) at the hydrophobic channel of the protein leading to a reorientation of a monomer. This reorientation causes a transition between 'inactive' to 'active' states, causing alignment of C-terminal and membrane-docking sites (MDoS) side-by-side and putting the membrane-disruption sites (MDiS) in the same plane, exposed to solvent and in a symmetric position for both monomers. The MDoS region stabilizes the toxin on membrane by the interaction of charged residues with phospholipid head groups. Subsequently, the MDiS region destabilizes the membrane with penetration of hydrophobic residues. This insertion causes a disorganization of the membrane, allowing an uncontrolled influx of ions (i.e. calcium and sodium), and eventually triggering irreversible intracellular alterations and cell death. The sequence is that of Phospholipase A2 homolog 1 from Bothrops atrox (Barba amarilla).